Reading from the N-terminus, the 172-residue chain is RTX-I toxin-activating lysine-acyltransferase ApxIC (172 aa).

Catalysis depends on residues histidine 24 and aspartate 93.

It belongs to the RTX toxin acyltransferase family. Homodimer.

The protein localises to the cytoplasm. The enzyme catalyses a fatty acyl-[ACP] + L-lysyl-[protein] = N(6)-(fatty acyl)-L-lysyl-[protein] + holo-[ACP] + H(+). Its function is as follows. Protein-lysine acyltransferase that catalyzes fatty acylation of the protoxin, thereby converting it to the active toxin. This Actinobacillus pleuropneumoniae (Haemophilus pleuropneumoniae) protein is RTX-I toxin-activating lysine-acyltransferase ApxIC.